The sequence spans 279 residues: Large ribosomal subunit protein uL2 (279 aa).

Disordered regions lie at residues 1 to 28 and 221 to 279; these read MPAR…TKEK and RGTV…GRRR. The segment covering 12-22 has biased composition (polar residues); it reads GRRNSSVLTRD.

This sequence belongs to the universal ribosomal protein uL2 family. Part of the 50S ribosomal subunit. Forms a bridge to the 30S subunit in the 70S ribosome.

Functionally, one of the primary rRNA binding proteins. Required for association of the 30S and 50S subunits to form the 70S ribosome, for tRNA binding and peptide bond formation. It has been suggested to have peptidyltransferase activity; this is somewhat controversial. Makes several contacts with the 16S rRNA in the 70S ribosome. The chain is Large ribosomal subunit protein uL2 from Rubrobacter xylanophilus (strain DSM 9941 / JCM 11954 / NBRC 16129 / PRD-1).